The primary structure comprises 116 residues: DNA-binding protein Tpen_0471 (116 aa).

This sequence belongs to the PDCD5 family.

In Thermofilum pendens (strain DSM 2475 / Hrk 5), this protein is DNA-binding protein Tpen_0471.